We begin with the raw amino-acid sequence, 298 residues long: Inosose dehydratase (298 aa).

The protein belongs to the IolE/MocC family. Requires glutathione as cofactor. Co(2+) is required as a cofactor. Mn(2+) serves as cofactor.

It carries out the reaction scyllo-inosose = 3D-3,5/4-trihydroxycyclohexane-1,2-dione + H2O. The protein operates within polyol metabolism; myo-inositol degradation into acetyl-CoA; acetyl-CoA from myo-inositol: step 2/7. Catalyzes the dehydration of inosose (2-keto-myo-inositol, 2KMI or 2,4,6/3,5-pentahydroxycyclohexanone) to 3D-(3,5/4)-trihydroxycyclohexane-1,2-dione (D-2,3-diketo-4-deoxy-epi-inositol). This chain is Inosose dehydratase, found in Clostridium botulinum (strain Alaska E43 / Type E3).